A 366-amino-acid polypeptide reads, in one-letter code: Ribosomal RNA large subunit methyltransferase M (366 aa).

S-adenosyl-L-methionine is bound by residues Ser-188, Cys-221–Gly-224, Asp-240, Asp-260, and Asp-277. Residue Lys-306 is the Proton acceptor of the active site.

This sequence belongs to the class I-like SAM-binding methyltransferase superfamily. RNA methyltransferase RlmE family. RlmM subfamily. As to quaternary structure, monomer.

The protein localises to the cytoplasm. The enzyme catalyses cytidine(2498) in 23S rRNA + S-adenosyl-L-methionine = 2'-O-methylcytidine(2498) in 23S rRNA + S-adenosyl-L-homocysteine + H(+). Functionally, catalyzes the 2'-O-methylation at nucleotide C2498 in 23S rRNA. In Shigella flexneri serotype 5b (strain 8401), this protein is Ribosomal RNA large subunit methyltransferase M.